Reading from the N-terminus, the 177-residue chain is Calerythrin (177 aa).

4 EF-hand domains span residues 5–40, 45–90, 100–134, and 134–169; these read IASD…IAEA, AGAA…NLIF, VLGP…ALGM, and MSKA…FHFG. 4 residues coordinate Ca(2+): Asp-18, Asp-20, Asn-22, and Asp-29. Positions 113, 115, 117, 119, 124, 147, 149, 151, 153, and 158 each coordinate Ca(2+).

The protein is Calerythrin of Saccharopolyspora erythraea (Streptomyces erythraeus).